The primary structure comprises 24 residues: Prokineticin 1-like protein (24 aa).

Residues Cys-7 and Cys-19 are joined by a disulfide bond.

In terms of tissue distribution, expressed by the skin glands.

Its subcellular location is the secreted. Stimulates insulin secretion by BRIN-BD11 cells in vitro. The polypeptide is Prokineticin 1-like protein (Pelophylax saharicus (Sahara frog)).